Reading from the N-terminus, the 350-residue chain is Inositol 2-dehydrogenase/D-chiro-inositol 3-dehydrogenase (350 aa).

This sequence belongs to the Gfo/Idh/MocA family. In terms of assembly, homotetramer.

The catalysed reaction is myo-inositol + NAD(+) = scyllo-inosose + NADH + H(+). It catalyses the reaction 1D-chiro-inositol + NAD(+) = scyllo-inosine + NADH + H(+). The protein operates within polyol metabolism; myo-inositol degradation into acetyl-CoA; acetyl-CoA from myo-inositol: step 1/7. In terms of biological role, involved in the oxidation of myo-inositol (MI) and D-chiro-inositol (DCI) to 2-keto-myo-inositol (2KMI or 2-inosose) and 1-keto-D-chiro-inositol (1KDCI), respectively. The protein is Inositol 2-dehydrogenase/D-chiro-inositol 3-dehydrogenase of Lactiplantibacillus plantarum (strain ATCC BAA-793 / NCIMB 8826 / WCFS1) (Lactobacillus plantarum).